The chain runs to 202 residues: ATP-dependent Clp protease proteolytic subunit (202 aa).

Catalysis depends on Ser-106, which acts as the Nucleophile. Residue His-131 is part of the active site.

Belongs to the peptidase S14 family. Fourteen ClpP subunits assemble into 2 heptameric rings which stack back to back to give a disk-like structure with a central cavity, resembling the structure of eukaryotic proteasomes.

It localises to the cytoplasm. The enzyme catalyses Hydrolysis of proteins to small peptides in the presence of ATP and magnesium. alpha-casein is the usual test substrate. In the absence of ATP, only oligopeptides shorter than five residues are hydrolyzed (such as succinyl-Leu-Tyr-|-NHMec, and Leu-Tyr-Leu-|-Tyr-Trp, in which cleavage of the -Tyr-|-Leu- and -Tyr-|-Trp bonds also occurs).. In terms of biological role, cleaves peptides in various proteins in a process that requires ATP hydrolysis. Has a chymotrypsin-like activity. Plays a major role in the degradation of misfolded proteins. In Shewanella baltica (strain OS223), this protein is ATP-dependent Clp protease proteolytic subunit.